The primary structure comprises 177 residues: Dual-action ribosomal maturation protein DarP (177 aa).

It belongs to the DarP family.

It is found in the cytoplasm. Its function is as follows. Member of a network of 50S ribosomal subunit biogenesis factors which assembles along the 30S-50S interface, preventing incorrect 23S rRNA structures from forming. Promotes peptidyl transferase center (PTC) maturation. The chain is Dual-action ribosomal maturation protein DarP from Histophilus somni (strain 129Pt) (Haemophilus somnus).